We begin with the raw amino-acid sequence, 271 residues long: MNPNKERLIEIFRSNVKGRIPDISGRNIRHDGRWGHWLEERFGISANADNHADILGYELKNEATSGKTTFGDWSANEYIFKTPPYNSLFSGSTASEKQNAFCRMFGKPNEAKNGRFSWSGSPIPKIWQYNSFGQIMVIEENLDIVIYYSFSQDLRYNKFEIIPPQLQHDEIQIARWYGVANPLLSRRGKTLKDKLEDKFNDLGWFTCTTDSIGAYDKICFGRPITFENWINLVDSGIVYFDSGMYEGNKRPYSQWRADNSYWNSLITDCHQ.

It carries out the reaction Endonucleolytic cleavage of DNA to give specific double-stranded fragments with terminal 5'-phosphates.. A P subtype restriction enzyme that recognizes the double-stranded sequence 5'-CCNGG-3' and cleaves after C-2. This is Type II restriction enzyme ScrFI from Lactococcus lactis subsp. cremoris (Streptococcus cremoris).